The chain runs to 359 residues: Glutamine synthetase (359 aa).

The 80-residue stretch at 28–107 (VMAEYIWIDG…VLAACYTADG (80 aa)) folds into the GS beta-grasp domain. Residues 114–359 (HRDACAKLLE…GIITETMFEH (246 aa)) enclose the GS catalytic domain. The residue at position 273 (S273) is a Phosphoserine. T303 carries the post-translational modification Phosphothreonine. Residue S305 is modified to Phosphoserine.

Belongs to the glutamine synthetase family. In terms of assembly, homooctamer.

The protein resides in the cytoplasm. The enzyme catalyses L-glutamate + NH4(+) + ATP = L-glutamine + ADP + phosphate + H(+). The sequence is that of Glutamine synthetase (gln1) from Schizosaccharomyces pombe (strain 972 / ATCC 24843) (Fission yeast).